A 146-amino-acid polypeptide reads, in one-letter code: UPF0178 protein Helmi_09130 (146 aa).

The protein belongs to the UPF0178 family.

The sequence is that of UPF0178 protein Helmi_09130 from Heliobacterium modesticaldum (strain ATCC 51547 / Ice1).